Consider the following 105-residue polypeptide: NADH-quinone oxidoreductase subunit K (105 aa).

The next 3 helical transmembrane spans lie at 9–29, 34–54, and 65–85; these read PNYYLVLAAVLFTIGAAGVLV, IVLFMCVELMLNAANLTLVTF, and IMAFFVMVVAAAEVVVGLAII.

The protein belongs to the complex I subunit 4L family. In terms of assembly, NDH-1 is composed of 14 different subunits. Subunits NuoA, H, J, K, L, M, N constitute the membrane sector of the complex.

The protein localises to the cell membrane. The enzyme catalyses a quinone + NADH + 5 H(+)(in) = a quinol + NAD(+) + 4 H(+)(out). NDH-1 shuttles electrons from NADH, via FMN and iron-sulfur (Fe-S) centers, to quinones in the respiratory chain. The immediate electron acceptor for the enzyme in this species is believed to be a menaquinone. Couples the redox reaction to proton translocation (for every two electrons transferred, four hydrogen ions are translocated across the cytoplasmic membrane), and thus conserves the redox energy in a proton gradient. In Salinispora tropica (strain ATCC BAA-916 / DSM 44818 / JCM 13857 / NBRC 105044 / CNB-440), this protein is NADH-quinone oxidoreductase subunit K.